The primary structure comprises 85 residues: Coiled-coil-helix-coiled-coil-helix domain-containing protein 7 (85 aa).

Residues 13-55 (INPCLSESDASTRCMDENNYDRERCSSYFLKYKNCRRFWNSVM) form the CHCH domain. 2 short sequence motifs (cx9C motif) span residues 16–26 (CLSESDASTRC) and 37–47 (CSSYFLKYKNC). Disulfide bonds link C16/C47 and C26/C37.

Belongs to the CHCHD7 family. As to quaternary structure, monomer.

The protein resides in the mitochondrion intermembrane space. The chain is Coiled-coil-helix-coiled-coil-helix domain-containing protein 7 (Chchd7) from Mus musculus (Mouse).